The sequence spans 86 residues: SEED MATURATION PROTEIN 1 (86 aa).

A disordered region spans residues 52-86 (RIEKGKEQSAASGDQTQIQRDIKDIKGTRTDDSPR). Polar residues predominate over residues 60–70 (SAASGDQTQIQ). A compositionally biased stretch (basic and acidic residues) spans 71–86 (RDIKDIKGTRTDDSPR).

It belongs to the LEA type 3 family.

In terms of biological role, protein chaperone involved in seed maturation and dormancy maintenance after high temperature fluctuation (e.g. secondary dormancy after 3 days at 40 degrees Celsius), probably by protecting heat labile proteins required for secondary dormancy (e.g. G6PDH, HOP3, SR45, ECP63, SCL33, RPL32B, ChlADR1, MSBP1, MBF1B, At3g01690, At1g15280, At1g15290, At2g31410, At1g11630, At1g65090, EMB2279, EMB1674 and RPL35C). This is SEED MATURATION PROTEIN 1 from Arabidopsis thaliana (Mouse-ear cress).